Consider the following 556-residue polypeptide: 2-succinyl-5-enolpyruvyl-6-hydroxy-3-cyclohexene-1-carboxylate synthase (556 aa).

This sequence belongs to the TPP enzyme family. MenD subfamily. As to quaternary structure, homodimer. Mg(2+) serves as cofactor. The cofactor is Mn(2+). Thiamine diphosphate is required as a cofactor.

It catalyses the reaction isochorismate + 2-oxoglutarate + H(+) = 5-enolpyruvoyl-6-hydroxy-2-succinyl-cyclohex-3-ene-1-carboxylate + CO2. It participates in quinol/quinone metabolism; 1,4-dihydroxy-2-naphthoate biosynthesis; 1,4-dihydroxy-2-naphthoate from chorismate: step 2/7. Its pathway is quinol/quinone metabolism; menaquinone biosynthesis. Its function is as follows. Catalyzes the thiamine diphosphate-dependent decarboxylation of 2-oxoglutarate and the subsequent addition of the resulting succinic semialdehyde-thiamine pyrophosphate anion to isochorismate to yield 2-succinyl-5-enolpyruvyl-6-hydroxy-3-cyclohexene-1-carboxylate (SEPHCHC). In Klebsiella pneumoniae subsp. pneumoniae (strain ATCC 700721 / MGH 78578), this protein is 2-succinyl-5-enolpyruvyl-6-hydroxy-3-cyclohexene-1-carboxylate synthase.